Reading from the N-terminus, the 409-residue chain is Nucleoprotein (409 aa).

Disordered regions lie at residues 1–32 (MASG…SSGN), 46–84 (SPQP…KGRR), 121–194 (ADVK…GSED), and 238–259 (VDQV…DKMN). The segment at 29–160 (SSGNASWFQA…GNFRWDFIPL (132 aa)) is RNA-binding. Residues 31 to 156 (GNASWFQAIK…GGPDGNFRWD (126 aa)) enclose the CoV N NTD domain. Over residues 70–84 (YWRRQARFKPGKGRR) the composition is skewed to basic residues. Residues 162–179 (RGRSGRSTAASSAASSRP) show a composition bias toward low complexity. 2 stretches are compositionally biased toward basic and acidic residues: residues 180 to 192 (PSRE…RSGS) and 247 to 259 (KGKE…DKMN). 2 positions are modified to phosphoserine; by host: S190 and S192. The CoV N CTD domain occupies 215–331 (TKAKADEMAH…QCVDGVGTRP (117 aa)). The segment at 226–333 (RYCKRTIPPG…VDGVGTRPKD (108 aa)) is dimerization. C320 and C323 are joined by a disulfide. Positions 326–409 (GVGTRPKDDE…GDSALGENEL (84 aa)) are disordered. The segment covering 341–356 (RSSSRPATRTSSPAPR) has biased composition (low complexity). The span at 358-367 (QRLKKEKRPK) shows a compositional bias: basic residues. Positions 368 to 384 (KQDDEVDKALTSDEERN) are enriched in basic and acidic residues. Position 378 is a phosphothreonine; by host (T378). S379 bears the Phosphoserine; by host mark.

It belongs to the gammacoronavirus nucleocapsid protein family. As to quaternary structure, homooligomer. Both monomeric and oligomeric forms interact with RNA. Interacts with protein M. Interacts with NSP3; this interaction serves to tether the genome to the newly translated replicase-transcriptase complex at a very early stage of infection. In terms of processing, ADP-ribosylated. The ADP-ribosylation is retained in the virion during infection. Post-translationally, phosphorylated on serine and threonine residues.

It localises to the virion. Its subcellular location is the host endoplasmic reticulum-Golgi intermediate compartment. The protein localises to the host Golgi apparatus. In terms of biological role, packages the positive strand viral genome RNA into a helical ribonucleocapsid (RNP) and plays a fundamental role during virion assembly through its interactions with the viral genome and membrane protein M. Plays an important role in enhancing the efficiency of subgenomic viral RNA transcription as well as viral replication. The chain is Nucleoprotein from Avian infectious bronchitis virus (strain Gray) (IBV).